Here is a 159-residue protein sequence, read N- to C-terminus: MDAIATIVELVREVVEPVIEAPFELVDIEYGKIGSDMILSIFVDKPEGITLNDTADLTEMISPVLDTIKPDPFPEQYFLEITSPGLERPLKTKDAVAGAVGKYIHVGLYQAIDKQKVFEGTLLAFEEDELTMEYMDKTRKKTVQIPYSLVSKARLAVKL.

The protein belongs to the RimP family.

It is found in the cytoplasm. Functionally, required for maturation of 30S ribosomal subunits. This chain is Ribosome maturation factor RimP, found in Streptococcus pneumoniae (strain 70585).